The following is a 472-amino-acid chain: H(+)/Cl(-) exchange transporter ClcA (472 aa).

At methionine 1–proline 32 the chain is on the cytoplasmic side. The chain crosses the membrane as a helical span at residues leucine 33 to alanine 69. At glutamine 70–tyrosine 76 the chain is on the periplasmic side. A helical membrane pass occupies residues leucine 77–phenylalanine 100. Residues glycine 106–proline 110 carry the Selectivity filter part_1 motif. Serine 107 provides a ligand contact to chloride. An intramembrane region (helical) is located at residues isoleucine 109–leucine 116. Over glutamate 117–arginine 123 the chain is Cytoplasmic. Transmembrane regions (helical) follow at residues tryptophan 124 to alanine 141 and glutamate 148 to phenylalanine 166. A Selectivity filter part_2 motif is present at residues glycine 146–proline 150. The Cytoplasmic segment spans residues arginine 167–threonine 176. 2 consecutive intramembrane regions (helical) follow at residues leucine 177–alanine 189 and proline 193–isoleucine 201. Over glutamate 202 to serine 214 the chain is Cytoplasmic. Residues isoleucine 215–phenylalanine 232 form a helical membrane-spanning segment. Residues asparagine 233–leucine 252 are Periplasmic-facing. A helical transmembrane segment spans residues tryptophan 253–glutamine 281. Residues arginine 282–asparagine 287 lie on the Cytoplasmic side of the membrane. Residues isoleucine 288 to glutamine 309 traverse the membrane as a helical segment. Topologically, residues proline 310 to serine 329 are periplasmic. The next 2 helical transmembrane spans lie at valine 330 to serine 349 and glycine 355 to isoleucine 376. The Selectivity filter part_3 motif lies at glycine 355–proline 359. Chloride-binding residues include isoleucine 356 and phenylalanine 357. Residues proline 377–alanine 386 lie on the Periplasmic side of the membrane. Residues glycine 387 to serine 401 constitute an intramembrane region (helical). An intramembrane region (note=Loop between two helices) is located at residues valine 402 to alanine 404. Positions proline 405 to threonine 416 form an intramembrane region, helical. Residues aspartate 417–leucine 421 constitute an intramembrane region (note=Loop between two helices). The chain crosses the membrane as a helical span at residues isoleucine 422–phenylalanine 438. Over leucine 439–threonine 472 the chain is Cytoplasmic. Tyrosine 445 contributes to the chloride binding site.

This sequence belongs to the chloride channel (TC 2.A.49) family. ClcA subfamily. Homodimer.

It is found in the cell inner membrane. It carries out the reaction 2 chloride(in) + H(+)(out) = 2 chloride(out) + H(+)(in). Its function is as follows. Proton-coupled chloride transporter. Functions as antiport system and exchanges two chloride ions for 1 proton. Probably acts as an electrical shunt for an outwardly-directed proton pump that is linked to amino acid decarboxylation, as part of the extreme acid resistance (XAR) response. This Klebsiella pneumoniae subsp. pneumoniae (strain ATCC 700721 / MGH 78578) protein is H(+)/Cl(-) exchange transporter ClcA.